The chain runs to 132 residues: Small ribosomal subunit protein uS8 (132 aa).

This sequence belongs to the universal ribosomal protein uS8 family. As to quaternary structure, part of the 30S ribosomal subunit. Contacts proteins S5 and S12.

In terms of biological role, one of the primary rRNA binding proteins, it binds directly to 16S rRNA central domain where it helps coordinate assembly of the platform of the 30S subunit. In Alkaliphilus oremlandii (strain OhILAs) (Clostridium oremlandii (strain OhILAs)), this protein is Small ribosomal subunit protein uS8.